The following is a 310-amino-acid chain: MGNNMTLITEFILLGFPLSPRMQMLLFALFSLFYAFTLLGNGTIVGLICLDSRLHTPMYFFLSHLAIVDIAYACNTVPQMLVNLLDPVKPISYAGCMTQTFLFLTFAITECLLLVVMSYDRYVAICHPLRYSAIMSWRVCSTMAVTSWIIGVLLSLIHLVLLLPLPFCVSQKVNHFFCEITAILKLACADTHLNETMVLAGAVSVLVGPFSSIVVSYACILGAILKIQSEEGQRKAFSTCSSHLCVVGLFYGTAIVMYVGPRHGSPKEQKKYLLLFHSLFNPMLNPLIYSLRNSDVKNTLKRVLRTQRAL.

Residues 1 to 24 (MGNNMTLITEFILLGFPLSPRMQM) lie on the Extracellular side of the membrane. Asparagine 4 carries N-linked (GlcNAc...) asparagine glycosylation. Residues 25–45 (LLFALFSLFYAFTLLGNGTIV) traverse the membrane as a helical segment. At 46 to 53 (GLICLDSR) the chain is on the cytoplasmic side. The chain crosses the membrane as a helical span at residues 54–74 (LHTPMYFFLSHLAIVDIAYAC). The Extracellular portion of the chain corresponds to 75 to 96 (NTVPQMLVNLLDPVKPISYAGC). The cysteines at positions 96 and 178 are disulfide-linked. A helical membrane pass occupies residues 97 to 117 (MTQTFLFLTFAITECLLLVVM). Residues 118-148 (SYDRYVAICHPLRYSAIMSWRVCSTMAVTSW) are Cytoplasmic-facing. The chain crosses the membrane as a helical span at residues 149-169 (IIGVLLSLIHLVLLLPLPFCV). The Extracellular segment spans residues 170–204 (SQKVNHFFCEITAILKLACADTHLNETMVLAGAVS). A glycan (N-linked (GlcNAc...) asparagine) is linked at asparagine 194. A helical transmembrane segment spans residues 205–225 (VLVGPFSSIVVSYACILGAIL). Residues 226–239 (KIQSEEGQRKAFST) lie on the Cytoplasmic side of the membrane. The chain crosses the membrane as a helical span at residues 240–260 (CSSHLCVVGLFYGTAIVMYVG). Residues 261-273 (PRHGSPKEQKKYL) are Extracellular-facing. A helical transmembrane segment spans residues 274–291 (LLFHSLFNPMLNPLIYSL). Over 292–310 (RNSDVKNTLKRVLRTQRAL) the chain is Cytoplasmic.

The protein belongs to the G-protein coupled receptor 1 family. As to expression, olfactory epithelium.

Its subcellular location is the cell membrane. Odorant receptor. This is Olfactory receptor 2A7 from Mus musculus (Mouse).